We begin with the raw amino-acid sequence, 682 residues long: DNA ligase (682 aa).

NAD(+)-binding positions include 43–47 (DSEYD), 92–93 (SL), and Asp123. Lys125 acts as the N6-AMP-lysine intermediate in catalysis. NAD(+) contacts are provided by Arg146, Glu184, Lys302, and Lys326. The Zn(2+) site is built by Cys420, Cys423, Cys438, and Cys443. One can recognise a BRCT domain in the interval 603–682 (TTKGFFTGKK…TFLQKLLIVL (80 aa)).

Belongs to the NAD-dependent DNA ligase family. LigA subfamily. The cofactor is Mg(2+). Mn(2+) serves as cofactor.

It carries out the reaction NAD(+) + (deoxyribonucleotide)n-3'-hydroxyl + 5'-phospho-(deoxyribonucleotide)m = (deoxyribonucleotide)n+m + AMP + beta-nicotinamide D-nucleotide.. Its function is as follows. DNA ligase that catalyzes the formation of phosphodiester linkages between 5'-phosphoryl and 3'-hydroxyl groups in double-stranded DNA using NAD as a coenzyme and as the energy source for the reaction. It is essential for DNA replication and repair of damaged DNA. In Lawsonia intracellularis (strain PHE/MN1-00), this protein is DNA ligase.